Reading from the N-terminus, the 447-residue chain is CBL-interacting serine/threonine-protein kinase 9 (447 aa).

Residues 19–274 (YEMGRTLGEG…IAELLEDEWF (256 aa)) form the Protein kinase domain. Residues 25–33 (LGEGSFAKV) and Lys48 each bind ATP. Asp142 functions as the Proton acceptor in the catalytic mechanism. The activation loop stretch occupies residues 160–189 (DFGLSAFSRQVREDGLLHTACGTPNYVAPE). At Ser164 the chain carries Phosphoserine. Thr178 carries the phosphothreonine modification. One can recognise an NAF domain in the interval 312-336 (EKPVSMNAFELISSSSEFSLENLFE). Positions 343–372 (KKETRFTSQRSASEIMSKMEETAKPLGFNV) are PPI.

Belongs to the protein kinase superfamily. CAMK Ser/Thr protein kinase family. SNF1 subfamily. Interacts with CBL2 and CBL3. Requires Mn(2+) as cofactor. In terms of tissue distribution, expressed at low levels in roots and shoots. Detected in root vascular bundles and in the leaf vascular tissue and hydathode, but not in root tips.

The protein resides in the cytoplasm. It is found in the nucleus. It catalyses the reaction L-seryl-[protein] + ATP = O-phospho-L-seryl-[protein] + ADP + H(+). The catalysed reaction is L-threonyl-[protein] + ATP = O-phospho-L-threonyl-[protein] + ADP + H(+). Functionally, CIPK serine-threonine protein kinases interact with CBL proteins. Binding of a CBL protein to the regulatory NAF domain of CIPK protein lead to the activation of the kinase in a calcium-dependent manner. Involved in K(+) homeostasis under low-K(+) stress. The protein is CBL-interacting serine/threonine-protein kinase 9 (CIPK9) of Arabidopsis thaliana (Mouse-ear cress).